The chain runs to 450 residues: UDP-N-acetylmuramoylalanine--D-glutamate ligase (450 aa).

119 to 125 (GSNGKTT) lines the ATP pocket.

This sequence belongs to the MurCDEF family.

Its subcellular location is the cytoplasm. It catalyses the reaction UDP-N-acetyl-alpha-D-muramoyl-L-alanine + D-glutamate + ATP = UDP-N-acetyl-alpha-D-muramoyl-L-alanyl-D-glutamate + ADP + phosphate + H(+). It functions in the pathway cell wall biogenesis; peptidoglycan biosynthesis. In terms of biological role, cell wall formation. Catalyzes the addition of glutamate to the nucleotide precursor UDP-N-acetylmuramoyl-L-alanine (UMA). In Bacillus cereus (strain ATCC 10987 / NRS 248), this protein is UDP-N-acetylmuramoylalanine--D-glutamate ligase.